The primary structure comprises 29 residues: U-homostoxin-Hdu1a (29 aa).

Thr1 carries O-linked (GlcNAc...) threonine glycosylation. 2 cysteine pairs are disulfide-bonded: Cys7-Cys19 and Cys10-Cys25.

It belongs to the sea anemone BBH family.

The protein resides in the secreted. Its subcellular location is the nematocyst. The sequence is that of U-homostoxin-Hdu1a from Homostichanthus duerdeni (Sea anemone).